The following is a 421-amino-acid chain: Gamma-glutamyl phosphate reductase (421 aa).

This sequence belongs to the gamma-glutamyl phosphate reductase family.

It is found in the cytoplasm. The enzyme catalyses L-glutamate 5-semialdehyde + phosphate + NADP(+) = L-glutamyl 5-phosphate + NADPH + H(+). It functions in the pathway amino-acid biosynthesis; L-proline biosynthesis; L-glutamate 5-semialdehyde from L-glutamate: step 2/2. Functionally, catalyzes the NADPH-dependent reduction of L-glutamate 5-phosphate into L-glutamate 5-semialdehyde and phosphate. The product spontaneously undergoes cyclization to form 1-pyrroline-5-carboxylate. The chain is Gamma-glutamyl phosphate reductase from Stutzerimonas stutzeri (strain A1501) (Pseudomonas stutzeri).